Reading from the N-terminus, the 199-residue chain is Probable GTP-binding protein EngB (199 aa).

Residues 28-199 (DLPEIALAGR…ESWDTILEYL (172 aa)) form the EngB-type G domain. GTP contacts are provided by residues 36 to 43 (GRSNVGKS), 63 to 67 (GKTQL), 81 to 84 (DVPG), 148 to 151 (TKAD), and 180 to 182 (FSS). Mg(2+) is bound by residues Ser-43 and Thr-65.

Belongs to the TRAFAC class TrmE-Era-EngA-EngB-Septin-like GTPase superfamily. EngB GTPase family. Requires Mg(2+) as cofactor.

In terms of biological role, necessary for normal cell division and for the maintenance of normal septation. The polypeptide is Probable GTP-binding protein EngB (Streptococcus equi subsp. equi (strain 4047)).